Here is an 838-residue protein sequence, read N- to C-terminus: Transient receptor potential cation channel subfamily V member 1 (838 aa).

Disordered stretches follow at residues 1-63 (MEQR…PLDC) and 86-109 (RPGD…EKPP). Residues 1 to 432 (MEQRASLDSE…QDKWDRFVKR (432 aa)) lie on the Cytoplasmic side of the membrane. Residues 110 to 138 (RLYDRRSIFDAVAQSNCQELESLLPFLQR) form an ANK 1 repeat. Position 115 (Arg115) interacts with ATP. Ser116 carries the post-translational modification Phosphoserine; by PKA and PKD. The residue at position 144 (Thr144) is a Phosphothreonine; by PKA; in vitro. The ANK 2 repeat unit spans residues 153 to 185 (TGKTCLLKAMLNLHNGQNDTIALLLDVARKTDS). Residues Lys155, Lys160, Asn164, 199-202 (YKGQ), and 210-211 (ER) each bind ATP. ANK repeat units follow at residues 203-228 (TALH…ADVQ), 249-276 (ELPL…QPAD), 285-321 (NTVL…KLHP), and 335-358 (TPLA…REIH). Thr370 carries the phosphothreonine; by PKA; in vitro modification. The stretch at 393–415 (NSVLEVIAYSSSETPNRHDMLLV) is one ANK 7 repeat. Residues 433–453 (IFYFNFFVYCLYMIIFTAAAY) traverse the membrane as a helical segment. Residues 454 to 471 (YRPVEGLPPYKLKNTVGD) are Extracellular-facing. A helical membrane pass occupies residues 472–497 (YFRVTGEILSVSGGVYFFFRGIQYFL). Over 498-510 (QRRPSLKSLFVDS) the chain is Cytoplasmic. Residue Ser502 is modified to Phosphoserine; by PKC/PRKCE. Resiniferatoxin is bound at residue 511 to 512 (YS). The helical transmembrane segment at 511–531 (YSEILFFVQSLFMLVSVVLYF) threads the bilayer. Residues 532 to 535 (SQRK) are Extracellular-facing. Residues 536–556 (EYVASMVFSLAMGWTNMLYYT) traverse the membrane as a helical segment. Resiniferatoxin-binding residues include Thr550 and Arg557. The Cytoplasmic portion of the chain corresponds to 557 to 571 (RGFQQMGIYAVMIEK). Residues 572–599 (MILRDLCRFMFVYLVFLFGFSTAVVTLI) traverse the membrane as a helical segment. At 600–626 (EDGKNNSLPMESTPHKCRGSACKPGNS) the chain is on the extracellular side. Asn604 is a glycosylation site (N-linked (GlcNAc...) asparagine). Residues 627–649 (YNSLYSTCLELFKFTIGMGDLEF) constitute an intramembrane region (pore-forming). A Na(+)-binding site is contributed by Gly643. A Selectivity filter motif is present at residues 643–646 (GMGD). Asp646 serves as a coordination point for Ca(2+). Residues 650–657 (TENYDFKA) are Extracellular-facing. Residues 658-686 (VFIILLLAYVILTYILLLNMLIALMGETV) traverse the membrane as a helical segment. The tract at residues 684–712 (ETVNKIAQESKNIWKLQRAITILDTEKSF) is AD. Topologically, residues 687–838 (NKIAQESKNI…FKDSMVPGEK (152 aa)) are cytoplasmic. Phosphothreonine is present on Thr704. An interaction with calmodulin region spans residues 767–801 (EGVKRTLSFSLRSGRVSGRNWKNFALVPLLRDAST). Residue Ser774 is modified to Phosphoserine; by PKA; in vitro. Residues 777 to 792 (LRSGRVSGRNWKNFAL) form a required for PIP2-mediated channel inhibition region. Ser800 carries the phosphoserine; by PKC/PRKCE and PKC/PRKCZ modification. Ser820 carries the phosphoserine; by PKA; in vitro modification.

Belongs to the transient receptor (TC 1.A.4) family. TrpV subfamily. TRPV1 sub-subfamily. As to quaternary structure, homotetramer. Interacts with PIRT. May also form a heteromeric channel with TRPV3. Interacts with CALM, PRKCM and CSK. Interacts with PRKCG and NTRK1, probably by forming a trimeric complex. Interacts with the Scolopendra mutilans RhTx toxin. Interacts with the spider Tau-theraphotoxin-Hs1a. Interacts with TMEM100. Interacts with PACS2. Post-translationally, phosphorylation by PKA reverses capsaicin-induced dephosphorylation at multiple sites, probably including Ser-116 as a major phosphorylation site. Phosphorylation by CAMKII seems to regulate binding to vanilloids. Phosphorylated and modulated by PRKCE, PRKCM and probably PRKCZ. Dephosphorylation by calcineurin seems to lead to receptor desensitization and phosphorylation by CAMKII recovers activity. Predominantly expressed in trigeminal and dorsal root sensory ganglia. Expressed also in hippocampus, cortex, cerebellum, olfactory bulb, mesencephalon and hindbrain. High expression in the cell bodies and dendrites of neurons in the hippocampus and in the cortex. In the brain detected also in astrocytes and pericytes (at protein level). Isoform 1 and isoform 3 are expressed in brain and peripheral blood mononuclear cells.

The protein resides in the postsynaptic cell membrane. The protein localises to the cell projection. It localises to the dendritic spine membrane. It is found in the cell membrane. The enzyme catalyses Ca(2+)(in) = Ca(2+)(out). The catalysed reaction is Mg(2+)(in) = Mg(2+)(out). It carries out the reaction Na(+)(in) = Na(+)(out). It catalyses the reaction K(+)(in) = K(+)(out). Channel activity is activated via the interaction with PIRT and phosphatidylinositol 4,5-bisphosphate (PIP2). Both PIRT and PIP2 are required to activate channel activity. The channel is sensitized by ATP binding. Repeated stimulation with capsaicin gives rise to progressively smaller responses, due to desensitization. This desensitization is triggered by the influx of calcium ions and is inhibited by elevated ATP levels. Ca(2+) and CALM displace ATP from its binding site and trigger a conformation change that leads to a closed, desensitized channel. Intracellular PIP2 inhibits desensitization. The double-knot toxin (DkTx) from the Chinese earth tiger tarantula activates the channel and traps it in an open conformation. The Scolopendra mutilans RhTx toxin potentiates the heat activation pathway mediated by this channel by binding to the charge-rich outer pore region (in an activated state). Functionally, non-selective calcium permeant cation channel involved in detection of noxious chemical and thermal stimuli. Seems to mediate proton influx and may be involved in intracellular acidosis in nociceptive neurons. Involved in mediation of inflammatory pain and hyperalgesia. Sensitized by a phosphatidylinositol second messenger system activated by receptor tyrosine kinases, which involves PKC isozymes and PCL. Activation by vanilloids, like capsaicin, and temperatures higher than 42 degrees Celsius. Upon activation, exhibits a time- and Ca(2+)-dependent outward rectification, followed by a long-lasting refractory state. Mild extracellular acidic pH (6.5) potentiates channel activation by noxious heat and vanilloids, whereas acidic conditions (pH &lt;6) directly activate the channel. Can be activated by endogenous compounds, including 12-hydroperoxytetraenoic acid and bradykinin. Acts as ionotropic endocannabinoid receptor with central neuromodulatory effects. Triggers a form of long-term depression (TRPV1-LTD) mediated by the endocannabinoid anandamine in the hippocampus and nucleus accumbens by affecting AMPA receptors endocytosis. Its function is as follows. Does not display channel activity in response to noxious chemical compounds, such as capsaicin and the vanilloid resiniferatoxin. Channel activity is not elicited by mildly acidic extracellular pH, and only slight channel activity is observed in response to noxiuos heat stimuli. The protein is Transient receptor potential cation channel subfamily V member 1 (Trpv1) of Rattus norvegicus (Rat).